Here is a 288-residue protein sequence, read N- to C-terminus: Probable HTH-type transcriptional regulator STM3175 (288 aa).

One can recognise an HTH araC/xylS-type domain in the interval 14-113 (RRVCDHIERH…GQSPRRFRQS (100 aa)). 2 consecutive DNA-binding regions (H-T-H motif) follow at residues 31–52 (EALS…TTWS) and 80–103 (VIDI…KTAF). The putative effector binding domain; binds the peptide antibiotic albicidin stretch occupies residues 111–288 (RQSPDWLAWH…LLTDIYLPLR (178 aa)).

Homodimer.

Probable transcription factor. This chain is Probable HTH-type transcriptional regulator STM3175, found in Salmonella typhimurium (strain LT2 / SGSC1412 / ATCC 700720).